Here is a 405-residue protein sequence, read N- to C-terminus: Glucose-1-phosphate adenylyltransferase 1 (405 aa).

Alpha-D-glucose 1-phosphate-binding positions include Y96, G161, 176-177 (EK), and S194.

This sequence belongs to the bacterial/plant glucose-1-phosphate adenylyltransferase family. Homotetramer.

It carries out the reaction alpha-D-glucose 1-phosphate + ATP + H(+) = ADP-alpha-D-glucose + diphosphate. It participates in glycan biosynthesis; glycogen biosynthesis. In terms of biological role, involved in the biosynthesis of ADP-glucose, a building block required for the elongation reactions to produce glycogen. Catalyzes the reaction between ATP and alpha-D-glucose 1-phosphate (G1P) to produce pyrophosphate and ADP-Glc. The sequence is that of Glucose-1-phosphate adenylyltransferase 1 from Vibrio vulnificus (strain YJ016).